A 1178-amino-acid polypeptide reads, in one-letter code: DNA-directed RNA polymerase subunit beta' (1178 aa).

Positions 60, 62, 75, and 78 each coordinate Zn(2+). Mg(2+) contacts are provided by Asp450, Asp452, and Asp454. Residues Cys795, Cys869, Cys876, and Cys879 each contribute to the Zn(2+) site.

The protein belongs to the RNA polymerase beta' chain family. As to quaternary structure, the RNAP catalytic core consists of 2 alpha, 1 beta, 1 beta' and 1 omega subunit. When a sigma factor is associated with the core the holoenzyme is formed, which can initiate transcription. The cofactor is Mg(2+). Requires Zn(2+) as cofactor.

The catalysed reaction is RNA(n) + a ribonucleoside 5'-triphosphate = RNA(n+1) + diphosphate. In terms of biological role, DNA-dependent RNA polymerase catalyzes the transcription of DNA into RNA using the four ribonucleoside triphosphates as substrates. The sequence is that of DNA-directed RNA polymerase subunit beta' from Clostridium botulinum (strain Okra / Type B1).